Consider the following 78-residue polypeptide: MGAGLPLVLLLTLVGSSQGAGPGMTLQLKLKNSLLANSSYNSSFLDFLQKFCLLLHLPLGTNVTLHQAGSSQHVTCRV.

The first 19 residues, 1 to 19 (MGAGLPLVLLLTLVGSSQG), serve as a signal peptide directing secretion. A glycan (N-linked (GlcNAc...) asparagine) is linked at asparagine 37.

N-glycosylated.

It localises to the secreted. The protein resides in the cytoplasmic vesicle. It is found in the secretory vesicle. Its subcellular location is the golgi apparatus. Putative surfactant protein. The polypeptide is Surfactant-associated protein 2 (SFTA2) (Bos taurus (Bovine)).